A 152-amino-acid chain; its full sequence is UPF0179 protein HQ_3004A (152 aa).

Belongs to the UPF0179 family.

The polypeptide is UPF0179 protein HQ_3004A (Haloquadratum walsbyi (strain DSM 16790 / HBSQ001)).